The following is a 60-amino-acid chain: Sec-independent protein translocase protein TatA (60 aa).

A helical membrane pass occupies residues 1-21 (MLSNIGVPGLILILVIALVIF).

The protein belongs to the TatA/E family. As to quaternary structure, forms a complex with TatC.

It is found in the cell membrane. Functionally, part of the twin-arginine translocation (Tat) system that transports large folded proteins containing a characteristic twin-arginine motif in their signal peptide across membranes. TatA could form the protein-conducting channel of the Tat system. This chain is Sec-independent protein translocase protein TatA, found in Anoxybacillus flavithermus (strain DSM 21510 / WK1).